The following is a 141-amino-acid chain: uncharacterized protein (141 aa).

Residues Ile8–Glu112 enclose the MaoC-like domain.

This is an uncharacterized protein from Bacillus subtilis (strain 168).